A 1006-amino-acid chain; its full sequence is DNA polymerase (1006 aa).

This sequence belongs to the DNA polymerase type-B family. As to quaternary structure, interacts with OPG148/A20. Component of the Uracil-DNA glycosylase(UDG)-OPG148/A20-polymerase complex; OPG148/A20 and OPG116/UDG form a heterodimeric processivity factor that associates with OPG071/E9 to form the processive polymerase holoenzyme.

The catalysed reaction is DNA(n) + a 2'-deoxyribonucleoside 5'-triphosphate = DNA(n+1) + diphosphate. Functionally, catalyzes DNA synthesis. Acquires processivity by associating with a heterodimeric processivity factor comprised of the viral OPG148/A20 and OPG116/D4 proteins, thereby forming the DNA polymerase holoenzyme. Displays 3'- to 5' exonuclease activity. Might participate in viral DNA recombination. Does not perform OPG116/D4synthesis across an abasic site. The chain is DNA polymerase (OPG071) from Bos taurus (Bovine).